Consider the following 372-residue polypeptide: Uroporphyrinogen decarboxylase (372 aa).

Residues 35-39 (RQAGR), Asp85, Tyr166, Ser221, and His342 each bind substrate.

The protein belongs to the uroporphyrinogen decarboxylase family. Homodimer.

The protein localises to the cytoplasm. The catalysed reaction is uroporphyrinogen III + 4 H(+) = coproporphyrinogen III + 4 CO2. It functions in the pathway porphyrin-containing compound metabolism; protoporphyrin-IX biosynthesis; coproporphyrinogen-III from 5-aminolevulinate: step 4/4. Its function is as follows. Catalyzes the decarboxylation of four acetate groups of uroporphyrinogen-III to yield coproporphyrinogen-III. The polypeptide is Uroporphyrinogen decarboxylase (Methylibium petroleiphilum (strain ATCC BAA-1232 / LMG 22953 / PM1)).